The chain runs to 523 residues: 2-oxopropyl-CoM reductase, carboxylating (523 aa).

FAD is bound at residue 53-54 (AA). R56 is a binding site for 2-oxopropyl-coenzyme M. FAD is bound at residue S81. C82 contributes to the 2-oxopropyl-coenzyme M binding site. Residues C82 and C87 are joined by a disulfide bond. Residue A158 coordinates FAD. NADP(+) is bound by residues 222 to 225 (GSKT) and 245 to 246 (RT). Residue D353 participates in FAD binding. E360 serves as a coordination point for NADP(+). An FAD-binding site is contributed by M361. R365 provides a ligand contact to 2-oxopropyl-coenzyme M. F501 contributes to the FAD binding site.

This sequence belongs to the class-I pyridine nucleotide-disulfide oxidoreductase family. In terms of assembly, homodimer. Component II of the aliphatic epoxide carboxylation complex together with components I, III and IV. It depends on FAD as a cofactor.

The catalysed reaction is coenzyme M + acetoacetate + NADP(+) = 2-oxopropyl-coenzyme M + CO2 + NADPH. Its pathway is alkene metabolism; propylene degradation. With respect to regulation, inhibited (at 40%) by the coenzyme M analog 2-bromoethanesulfonate (BES). BES is a time-dependent inactivator of dithiothreitol-reduced 2-KPCC, where the redox active cysteines are in the free thiol forms. BES does not inactivate air-oxidized 2-KPCC, where the redox active cysteine pair is in the disulfide form. BES specifically alkylates the interchange thiol that facilitates thioether bond cleavage and enolacetone formation during catalysis. In terms of biological role, involved in aliphatic epoxide carboxylation. Catalyzes the reductive cleavage of the thioether bond of 2-oxopropyl-coenzyme M (2-KPC), and the subsequent carboxylation of the ketopropyl cleavage product, yielding the products acetoacetate and free coenzyme M. This chain is 2-oxopropyl-CoM reductase, carboxylating, found in Xanthobacter autotrophicus (strain ATCC BAA-1158 / Py2).